The primary structure comprises 274 residues: Penicillin-insensitive murein endopeptidase (274 aa).

The signal sequence occupies residues 1 to 19; sequence MNKTAIALLALLASSASLA. Cystine bridges form between cysteine 44–cysteine 265, cysteine 187–cysteine 235, and cysteine 216–cysteine 223. The Zn(2+) site is built by histidine 110, histidine 113, aspartate 120, aspartate 147, histidine 150, and histidine 211. Residues 228–274 are disordered; the sequence is LPPSGDGCGAELQSWFEPPKPGTTKPEKKTPPPLPPSCQALLDEHVI.

This sequence belongs to the peptidase M74 family. Dimer. Zn(2+) serves as cofactor.

The protein localises to the periplasm. With respect to regulation, inhibited by Zn(2+) at 10 mM and by metal chelating agents EDTA and 1,10-phenanthroline. Functionally, murein endopeptidase that cleaves the D-alanyl-meso-2,6-diamino-pimelyl amide bond that connects peptidoglycan strands. Likely plays a role in the removal of murein from the sacculus and could also play a role in the integration of nascent murein strands into the sacculus. The chain is Penicillin-insensitive murein endopeptidase (mepA) from Escherichia coli (strain K12).